Here is a 195-residue protein sequence, read N- to C-terminus: Cytochrome c biogenesis ATP-binding export protein CcmA (195 aa).

Positions 1–195 (MLSLHQLQFN…IKSAQILQLV (195 aa)) constitute an ABC transporter domain. 33 to 40 (GANGSGKS) lines the ATP pocket.

Belongs to the ABC transporter superfamily. CcmA exporter (TC 3.A.1.107) family. In terms of assembly, the complex is composed of two ATP-binding proteins (CcmA) and two transmembrane proteins (CcmB).

It is found in the cell inner membrane. The enzyme catalyses heme b(in) + ATP + H2O = heme b(out) + ADP + phosphate + H(+). Part of the ABC transporter complex CcmAB involved in the biogenesis of c-type cytochromes; once thought to export heme, this seems not to be the case, but its exact role is uncertain. Responsible for energy coupling to the transport system. This chain is Cytochrome c biogenesis ATP-binding export protein CcmA, found in Rickettsia felis (strain ATCC VR-1525 / URRWXCal2) (Rickettsia azadi).